The following is a 183-amino-acid chain: Anterior gradient protein 1 (183 aa).

The N-terminal stretch at 1-18 (MQAGLSLVCLVLLCSALG) is a signal peptide.

It belongs to the AGR family. From stage 18 (neurula) onward, expressed in the cement gland until it degenerates. More weakly expressed in the adjacent hatching gland.

The protein resides in the secreted. Its function is as follows. Does not appear to be required for cement gland formation. This chain is Anterior gradient protein 1 (ag1), found in Xenopus laevis (African clawed frog).